Reading from the N-terminus, the 282-residue chain is Shikimate dehydrogenase (NADP(+)) (282 aa).

Residues 16–18 (SLS) and T63 contribute to the shikimate site. K67 (proton acceptor) is an active-site residue. N88 and D103 together coordinate shikimate. NADP(+)-binding positions include 128–132 (GAGGA) and G243.

Belongs to the shikimate dehydrogenase family. As to quaternary structure, homodimer.

It carries out the reaction shikimate + NADP(+) = 3-dehydroshikimate + NADPH + H(+). The protein operates within metabolic intermediate biosynthesis; chorismate biosynthesis; chorismate from D-erythrose 4-phosphate and phosphoenolpyruvate: step 4/7. Involved in the biosynthesis of the chorismate, which leads to the biosynthesis of aromatic amino acids. Catalyzes the reversible NADPH linked reduction of 3-dehydroshikimate (DHSA) to yield shikimate (SA). This Xylella fastidiosa (strain 9a5c) protein is Shikimate dehydrogenase (NADP(+)).